Reading from the N-terminus, the 412-residue chain is MGQDQTKQQIEKGLHLYQSNQTEKALQVWMRVLEKSADPAGRFRVLGCLITAHAEMGRYKDMLKFAVVQIDTARELEDPNYLTEGYLNLARSNEKLCEFQKTISYCKTCLNMQGTTVSLQLNGQVSLSMGNAFLGLSIFQKALECFEKALRYAHNNDDKMLECRVCCSLGNFYAQIKDYEKALFFPCKAAELVNDYGAGWSLKYRAMSQYHMAVAYRKLGRLADAMDCCEESMKIALQHGDRPLQALCLLCFADIHLSRRDVQTAFPRYDSAMSIMTEIGNRLGQIQVLLGVAKCWMIQKELDKALESIEKAQELAEGLGNKLGLLKLHCLCERIYRTKGLQQELRDHVVKFHECVEEMELYCGMCGESIGEKNNQLQALPCSHFFHLKCLQTNGTRGCPNCRRLSVKPGYV.

Gly-2 carries N-myristoyl glycine lipidation. TPR repeat units lie at residues 6–39 (TKQQ…SADP), 83–116 (TEGY…QGTT), 123–156 (GQVS…AHNN), 163–196 (CRVC…VNDY), 206–239 (AMSQ…ALQH), 246–279 (ALCL…MTEI), and 286–319 (IQVL…AEGL). The residue at position 196 (Tyr-196) is a Phosphotyrosine. The RING-type zinc-finger motif lies at 363–403 (CGMCGESIGEKNNQLQALPCSHFFHLKCLQTNGTRGCPNCR).

This sequence belongs to the RAPsyn family. In terms of tissue distribution, expressed in muscle fibers and in neurons.

The protein localises to the cell membrane. It is found in the postsynaptic cell membrane. It localises to the cytoplasm. The protein resides in the cytoskeleton. Functionally, postsynaptic protein required for clustering of nicotinic acetylcholine receptors (nAChRs) at the neuromuscular junction. It may link the receptor to the underlying postsynaptic cytoskeleton, possibly by direct association with actin or spectrin. The chain is 43 kDa receptor-associated protein of the synapse (RAPSN) from Gallus gallus (Chicken).